Here is a 470-residue protein sequence, read N- to C-terminus: Cysteine--tRNA ligase (470 aa).

Cysteine 27 lines the Zn(2+) pocket. Residues 29 to 39 (PTVYNHIHIGN) carry the 'HIGH' region motif. Zn(2+) is bound by residues cysteine 207, histidine 232, and glutamate 236. The 'KMSKS' region motif lies at 265 to 269 (KMAKS). Lysine 268 provides a ligand contact to ATP.

The protein belongs to the class-I aminoacyl-tRNA synthetase family. As to quaternary structure, monomer. It depends on Zn(2+) as a cofactor.

Its subcellular location is the cytoplasm. The catalysed reaction is tRNA(Cys) + L-cysteine + ATP = L-cysteinyl-tRNA(Cys) + AMP + diphosphate. This is Cysteine--tRNA ligase from Rubrobacter xylanophilus (strain DSM 9941 / JCM 11954 / NBRC 16129 / PRD-1).